Here is a 152-residue protein sequence, read N- to C-terminus: Ribosome maturation factor RimP (152 aa).

Belongs to the RimP family.

It localises to the cytoplasm. Required for maturation of 30S ribosomal subunits. This is Ribosome maturation factor RimP from Desulfitobacterium hafniense (strain DSM 10664 / DCB-2).